A 26-amino-acid polypeptide reads, in one-letter code: Aldehyde dehydrogenase beta chain (26 aa).

In terms of assembly, heterotrimer composed of an alpha, a beta and a gamma chain. The cofactor is FAD.

The catalysed reaction is an aldehyde + a quinone + H2O = a quinol + a carboxylate + H(+). This chain is Aldehyde dehydrogenase beta chain, found in Amycolatopsis methanolica.